The primary structure comprises 30 residues: NADH-ubiquinone oxidoreductase 18 kDa subunit (30 aa).

Complex I is composed of about 45 different subunits.

It localises to the mitochondrion inner membrane. The enzyme catalyses a ubiquinone + NADH + 5 H(+)(in) = a ubiquinol + NAD(+) + 4 H(+)(out). Transfer of electrons from NADH to the respiratory chain. The immediate electron acceptor for the enzyme is believed to be ubiquinone. The polypeptide is NADH-ubiquinone oxidoreductase 18 kDa subunit (Solanum tuberosum (Potato)).